A 224-amino-acid chain; its full sequence is UPF0758 protein SPO0054 (224 aa).

The MPN domain occupies 102–224 (VISSWDALLD…ELSFRAEGYL (123 aa)). H173, H175, and D186 together coordinate Zn(2+). The JAMM motif signature appears at 173-186 (HNHPSGDPTPSQSD).

This sequence belongs to the UPF0758 family.

This is UPF0758 protein SPO0054 from Ruegeria pomeroyi (strain ATCC 700808 / DSM 15171 / DSS-3) (Silicibacter pomeroyi).